The chain runs to 416 residues: Squamosa promoter-binding-like protein 8 (416 aa).

Residues 11-51 (SSCDDFGYNATPPPPPSLLPIMDQDGGGGSIQRDHHQHHNH) form a disordered region. The SBP-type zinc finger occupies 182–260 (PPRCQAEGCK…ADHNRRRRKS (79 aa)). Cysteine 185, cysteine 190, cysteine 207, histidine 210, cysteine 227, cysteine 230, histidine 234, and cysteine 246 together coordinate Zn(2+). The Bipartite nuclear localization signal signature appears at 243–259 (KKSCRKRLADHNRRRRK). The interval 250–299 (LADHNRRRRKSKPSDGEHSGEKRRAQANKSAATKDKAGSSSKNAGIGDGF) is disordered. The segment covering 261-273 (KPSDGEHSGEKRR) has biased composition (basic and acidic residues).

In terms of tissue distribution, expressed in stems, leaf sheaths, and young panicles. Weakly expressed in ligules, auricles, and leaf sheaths at the basal region.

The protein resides in the nucleus. Probable transcription factor that plays an important role in building the laminar joint between leaf blade and leaf sheath boundary, thereby controlling ligule and auricle development. The sequence is that of Squamosa promoter-binding-like protein 8 (SPL8) from Oryza sativa subsp. japonica (Rice).